We begin with the raw amino-acid sequence, 509 residues long: Ribonuclease Y (509 aa).

A helical transmembrane segment spans residues 5-25 (IAGVSGIAGAAVGAGACYLWL). Positions 199 to 265 (LINLVNLPSD…TRVIEILIED (67 aa)) constitute a KH domain. The HD domain maps to 325–418 (ALAHTLEVAK…VCAADTLSAA (94 aa)).

It belongs to the RNase Y family.

The protein localises to the cell membrane. Endoribonuclease that initiates mRNA decay. This Sulfurovum sp. (strain NBC37-1) protein is Ribonuclease Y.